The chain runs to 428 residues: Glutamyl-tRNA reductase (428 aa).

Substrate is bound by residues 49-52 (TCNR), S109, 114-116 (EGQ), and Q120. The active-site Nucleophile is the C50. 189 to 194 (GAGKMS) lines the NADP(+) pocket.

Belongs to the glutamyl-tRNA reductase family. In terms of assembly, homodimer.

It carries out the reaction (S)-4-amino-5-oxopentanoate + tRNA(Glu) + NADP(+) = L-glutamyl-tRNA(Glu) + NADPH + H(+). It participates in porphyrin-containing compound metabolism; protoporphyrin-IX biosynthesis; 5-aminolevulinate from L-glutamyl-tRNA(Glu): step 1/2. The protein operates within porphyrin-containing compound metabolism; chlorophyll biosynthesis. Functionally, catalyzes the NADPH-dependent reduction of glutamyl-tRNA(Glu) to glutamate 1-semialdehyde (GSA). The protein is Glutamyl-tRNA reductase of Gloeothece citriformis (strain PCC 7424) (Cyanothece sp. (strain PCC 7424)).